The chain runs to 368 residues: P2X receptor C (368 aa).

Topologically, residues 1–24 (MLDWDSILAYNTIKVVRIRDRRLG) are cytoplasmic. A helical transmembrane segment spans residues 25 to 45 (ILHLIFMIAIISYVVIYSAII). Over 46 to 368 (KKGYLSIEEP…DKLYHNIEAL (323 aa)) the chain is Lumenal. The pore-forming motif stretch occupies residues 282 to 295 (RHAIRLIFIQTGVI).

Belongs to the P2X receptor family.

It localises to the contractile vacuole membrane. Functionally, P2X receptors are ligand-gated ion channels that play a role in intracellular calcium signaling. ATP does not evoke inward currents in p2xC. Not essential for osmoregulation. The protein is P2X receptor C (p2xC) of Dictyostelium discoideum (Social amoeba).